A 774-amino-acid polypeptide reads, in one-letter code: Multiple C2 domain and transmembrane region protein 11 (774 aa).

Positions 1 to 12 are enriched in gly residues; sequence MAVNGTGNGTGD. The disordered stretch occupies residues 1-30; that stretch reads MAVNGTGNGTGDGDFSLKETSPNIGNGGVN. C2 domains lie at 9–145, 184–307, and 338–471; these read GTGD…PQWY, VTGE…SLWY, and LDES…THSY. The Ca(2+) site is built by aspartate 62, asparagine 110, aspartate 112, and aspartate 118. 2 helical membrane-spanning segments follow: residues 608–628 and 722–742; these read LFVV…CFVF and FVSC…FLAF.

This sequence belongs to the MCTP family. It depends on Ca(2+) as a cofactor. In terms of tissue distribution, observed in flowers.

It is found in the endoplasmic reticulum membrane. May function as a signaling molecule by regulating the trafficking of other regulators. The protein is Multiple C2 domain and transmembrane region protein 11 of Arabidopsis thaliana (Mouse-ear cress).